The sequence spans 103 residues: Interleukin-8 (103 aa).

An N-terminal signal peptide occupies residues 1–25 (MTSKLAVAFLAVFLLSAALCEAAVL). Position 27 is a citrulline (Arg-27). Disulfide bonds link Cys-34-Cys-61 and Cys-36-Cys-77.

The protein belongs to the intercrine alpha (chemokine CxC) family. Homodimer. Interacts with TNFAIP6 (via Link domain); this interaction interferes with chemokine binding to glycosaminoglycans. Citrullination at Arg-27 prevents proteolysis, and dampens tissue inflammation, it also enhances leukocytosis, possibly through impaired chemokine clearance from the blood circulation. As to expression, alveolar macrophages.

It localises to the secreted. Chemotactic factor that mediates inflammatory response by attracting neutrophils, basophils, and T-cells to clear pathogens and protect the host from infection. Also plays an important role in neutrophil activation. Released in response to an inflammatory stimulus, exerts its effect by binding to the G-protein-coupled receptors CXCR1 and CXCR2, primarily found in neutrophils, monocytes and endothelial cells. G-protein heterotrimer (alpha, beta, gamma subunits) constitutively binds to CXCR1/CXCR2 receptor and activation by IL8 leads to beta and gamma subunits release from Galpha (GNAI2 in neutrophils) and activation of several downstream signaling pathways including PI3K and MAPK pathways. The sequence is that of Interleukin-8 (CXCL8) from Sus scrofa (Pig).